The primary structure comprises 234 residues: Glucosamine-6-phosphate deaminase (234 aa).

Asp-62 functions as the Proton acceptor; for enolization step in the catalytic mechanism. Asn-128 acts as the For ring-opening step in catalysis. Residue His-130 is the Proton acceptor; for ring-opening step of the active site. The active-site For ring-opening step is the Glu-135.

This sequence belongs to the glucosamine/galactosamine-6-phosphate isomerase family. NagB subfamily.

It carries out the reaction alpha-D-glucosamine 6-phosphate + H2O = beta-D-fructose 6-phosphate + NH4(+). Its pathway is amino-sugar metabolism; N-acetylneuraminate degradation; D-fructose 6-phosphate from N-acetylneuraminate: step 5/5. Functionally, catalyzes the reversible isomerization-deamination of glucosamine 6-phosphate (GlcN6P) to form fructose 6-phosphate (Fru6P) and ammonium ion. The sequence is that of Glucosamine-6-phosphate deaminase from Streptococcus pyogenes serotype M18 (strain MGAS8232).